The primary structure comprises 302 residues: Homoserine O-acetyltransferase (302 aa).

The active-site Acyl-thioester intermediate is Cys142. Lys163 and Ser192 together coordinate substrate. His235 acts as the Proton acceptor in catalysis. Glu237 is an active-site residue. Arg249 serves as a coordination point for substrate.

It belongs to the MetA family.

Its subcellular location is the cytoplasm. It catalyses the reaction L-homoserine + acetyl-CoA = O-acetyl-L-homoserine + CoA. Its pathway is amino-acid biosynthesis; L-methionine biosynthesis via de novo pathway; O-acetyl-L-homoserine from L-homoserine: step 1/1. In terms of biological role, transfers an acetyl group from acetyl-CoA to L-homoserine, forming acetyl-L-homoserine. The protein is Homoserine O-acetyltransferase of Geobacillus kaustophilus.